The primary structure comprises 278 residues: Large ribosomal subunit protein uL2c (278 aa).

Disordered stretches follow at residues 32–56 (SLTSGKMSKKGRNNQGIITSRHRGG) and 203–256 (QSIG…PTIG). A compositionally biased stretch (basic residues) spans 209-220 (GSKRWQGKRPKV).

Belongs to the universal ribosomal protein uL2 family. Part of the 50S ribosomal subunit.

It localises to the plastid. Its subcellular location is the chloroplast. This Chara vulgaris (Common stonewort) protein is Large ribosomal subunit protein uL2c (rpl2).